A 324-amino-acid chain; its full sequence is UDP-N-acetylenolpyruvoylglucosamine reductase (324 aa).

An FAD-binding PCMH-type domain is found at 39–220; that stretch reads RTGGLAELFY…RAAMHEVALH (182 aa). The active site involves Arg185. Catalysis depends on Ser234, which acts as the Proton donor. The active site involves Glu304.

Belongs to the MurB family. FAD is required as a cofactor.

It localises to the cytoplasm. It carries out the reaction UDP-N-acetyl-alpha-D-muramate + NADP(+) = UDP-N-acetyl-3-O-(1-carboxyvinyl)-alpha-D-glucosamine + NADPH + H(+). The protein operates within cell wall biogenesis; peptidoglycan biosynthesis. Cell wall formation. This Bartonella bacilliformis (strain ATCC 35685 / KC583 / Herrer 020/F12,63) protein is UDP-N-acetylenolpyruvoylglucosamine reductase.